Here is a 107-residue protein sequence, read N- to C-terminus: Nucleoid-associated protein AZOSEA06390 (107 aa).

Belongs to the YbaB/EbfC family. Homodimer.

The protein localises to the cytoplasm. It is found in the nucleoid. Its function is as follows. Binds to DNA and alters its conformation. May be involved in regulation of gene expression, nucleoid organization and DNA protection. The chain is Nucleoid-associated protein AZOSEA06390 from Aromatoleum aromaticum (strain DSM 19018 / LMG 30748 / EbN1) (Azoarcus sp. (strain EbN1)).